The primary structure comprises 354 residues: Arginase-2, mitochondrial (354 aa).

The N-terminal 22 residues, 1–22, are a transit peptide targeting the mitochondrion; sequence MSYGSCVSRLLRTRVQSVLKKS. 4 residues coordinate Mn(2+): H120, D143, H145, and D147. Substrate is bound by residues 145-149, 156-158, and D202; these read HADIN and SGN. The Mn(2+) site is built by D251 and D253. Positions 265 and 296 each coordinate substrate. Residues 330 to 354 are disordered; it reads GHTVYEQLPPPSSPHESENAERVRI. Residues 344–354 show a composition bias toward basic and acidic residues; the sequence is HESENAERVRI.

The protein belongs to the arginase family. As to quaternary structure, homotrimer. Mn(2+) serves as cofactor.

The protein resides in the mitochondrion. It catalyses the reaction L-arginine + H2O = urea + L-ornithine. It participates in nitrogen metabolism; urea cycle; L-ornithine and urea from L-arginine: step 1/1. Functionally, may play a role in the regulation of extra-urea cycle arginine metabolism and also in down-regulation of nitric oxide synthesis. Extrahepatic arginase functions to regulate L-arginine bioavailability to nitric oxid synthase (NOS). Arginine metabolism is a critical regulator of innate and adaptive immune responses. Seems to be involved in negative regulation of the survival capacity of activated T cells. May suppress inflammation-related signaling in asthmatic airway epithelium. May play a role in promoting prenatal immune suppression. Regulates RPS6KB1 signaling, which promotes endothelial cell senescence and inflammation and implicates NOS3/eNOS dysfunction. Can inhibit endothelial autophagy independently of its enzymatic activity implicating mTORC2 signaling. Involved in vascular smooth muscle cell senescence and apoptosis independently of its enzymatic activity. In Oryctolagus cuniculus (Rabbit), this protein is Arginase-2, mitochondrial (ARG2).